We begin with the raw amino-acid sequence, 496 residues long: Cytochrome P450 3A56 (496 aa).

A heme-binding site is contributed by cysteine 441.

Belongs to the cytochrome P450 family. The cofactor is heme. In terms of tissue distribution, highly expressed in liver and intestine. Moderate expression in gill and spleen. Low expression in kidney, brain and heart.

It is found in the endoplasmic reticulum membrane. The protein resides in the microsome membrane. The catalysed reaction is an organic molecule + reduced [NADPH--hemoprotein reductase] + O2 = an alcohol + oxidized [NADPH--hemoprotein reductase] + H2O + H(+). In terms of biological role, putative steroid 6-beta-hydroxylase. In Fundulus heteroclitus (Killifish), this protein is Cytochrome P450 3A56 (cyp3a56).